The sequence spans 624 residues: Ceramide transfer protein (624 aa).

Positions 1-11 are enriched in polar residues; sequence MSDNQSWNSSG. Positions 1 to 24 are disordered; that stretch reads MSDNQSWNSSGSEEDPETESGPPV. Residues 23 to 117 form the PH domain; sequence PVERCGVLSK…WVDAIEQHKT (95 aa). Residues S126, S132, and S135 each carry the phosphoserine modification. The disordered stretch occupies residues 202–221; the sequence is DDEDDFPTTRSDGDFLHNTN. Residues 263 to 303 adopt a coiled-coil conformation; that stretch reads IELMVKREESWQKRHDREVEKRRRVEEAYKNVMEELKKKPR. S315 bears the Phosphoserine mark. Residues 321–327 carry the FFAT motif; it reads EFFDAVE. Y372 carries the post-translational modification Phosphotyrosine. S373, S377, and S380 each carry phosphoserine. Positions 389 to 618 constitute an START domain; it reads DVHRFSSQVE…FTSYVQEKTA (230 aa). An N-acylsphing-4-enine-binding residues include E472, Q493, N530, and Y579.

Interacts with VAPA and VAPB. Interaction with VAPB is less efficient than with VAPA. Interacts (via FFAT motif) with MOSPD2 (via MSP domain). Phosphorylation on Ser-132 decreases the affinity toward phosphatidylinositol 4-phosphate at Golgi membranes and reduces ceramide transfer activity. Inactivated by hyperphosphorylation of serine residues by CSNK1G2/CK1 that triggers dissociation from the Golgi complex, thus down-regulating ER-to-Golgi transport of ceramide and sphingomyelin synthesis.

It is found in the cytoplasm. Its subcellular location is the golgi apparatus. The protein localises to the endoplasmic reticulum. The enzyme catalyses N-hexadecanoylsphing-4-enine(in) = N-hexadecanoylsphing-4-enine(out). Functionally, shelters ceramides and diacylglycerol lipids inside its START domain and mediates the intracellular trafficking of ceramides and diacylglycerol lipids in a non-vesicular manner. This chain is Ceramide transfer protein (Cert1), found in Mus musculus (Mouse).